The primary structure comprises 100 residues: Ubiquitin-related modifier 1 homolog (100 aa).

Residue glycine 100 is modified to 1-thioglycine. A Glycyl lysine isopeptide (Gly-Lys) (interchain with K-? in acceptor proteins) cross-link involves residue glycine 100.

This sequence belongs to the URM1 family. In terms of processing, C-terminal thiocarboxylation occurs in 2 steps, it is first acyl-adenylated (-COAMP) via the hesA/moeB/thiF part of the MOCS3 homolog, then thiocarboxylated (-COSH) via the rhodanese domain of the MOCS3 homolog.

Its subcellular location is the cytoplasm. It functions in the pathway tRNA modification; 5-methoxycarbonylmethyl-2-thiouridine-tRNA biosynthesis. Functionally, acts as a sulfur carrier required for 2-thiolation of mcm(5)S(2)U at tRNA wobble positions of cytosolic tRNA(Lys), tRNA(Glu) and tRNA(Gln). Serves as sulfur donor in tRNA 2-thiolation reaction by being thiocarboxylated (-COSH) at its C-terminus by MOCS3. The sulfur is then transferred to tRNA to form 2-thiolation of mcm(5)S(2)U. Also acts as a ubiquitin-like protein (UBL) that is covalently conjugated via an isopeptide bond to lysine residues of target proteins. The thiocarboxylated form serves as substrate for conjugation and oxidative stress specifically induces the formation of UBL-protein conjugates. The protein is Ubiquitin-related modifier 1 homolog of Oryza sativa subsp. japonica (Rice).